Here is a 787-residue protein sequence, read N- to C-terminus: Serine proteinase stubble (787 aa).

The tract at residues 1-22 (MKQPTLIRPRLRHRRSTPAAAT) is disordered. Topologically, residues 1 to 58 (MKQPTLIRPRLRHRRSTPAAATKMCPKRHWLVNNRAAGSRGSGGAAARSRRSLDQIVE) are cytoplasmic. Residues 59-80 (VLVALIVVNCLATAAAALITPP) traverse the membrane as a helical; Signal-anchor for type II membrane protein segment. Residues 81–787 (DSLESLGSLG…FTPWILEHVR (707 aa)) lie on the Extracellular side of the membrane. Residue N177 is glycosylated (N-linked (GlcNAc...) asparagine). The segment at 225–516 (AGTLVIRPSG…EISDSSIPDA (292 aa)) is disordered. Low complexity-rich tracts occupy residues 262–280 (SASH…NPNS), 287–303 (QQQQ…NHWQ), 358–368 (PSTSTSTTSTS), 393–438 (SLAA…RTTT), and 449–485 (TTAT…VTSS). Residues 502-512 (GIETNEISDSS) are compositionally biased toward polar residues. 2 disulfides stabilise this stretch: C532-C660 and C575-C591. A Peptidase S1 domain is found at 544-787 (IVGGKSAAFG…FTPWILEHVR (244 aa)). Residues H590 and D640 each act as charge relay system in the active site. Residue N672 is glycosylated (N-linked (GlcNAc...) asparagine). Cystine bridges form between C704/C723 and C734/C763. The Charge relay system role is filled by S738.

It belongs to the peptidase S1 family. Post-translationally, may activate itself by proteolytic cleavage.

It localises to the membrane. In terms of biological role, hormone dependent protease required for epithelial morphogenesis, including the formation of bristles, legs, and wings. Has a dual function, detaches imaginal disk cells from extracellular matrices through its extracellular proteolytic domain and transmits an outside-to-inside signal to its intracellular domain to modify the cytoskeleton during morphogenesis. This chain is Serine proteinase stubble (Sb), found in Drosophila melanogaster (Fruit fly).